Here is a 458-residue protein sequence, read N- to C-terminus: COBRA-like protein 2 (458 aa).

A signal peptide spans 1-29 (MARFLLGAAAIALLAGVSSLLLMVPFAEA). 8 N-linked (GlcNAc...) asparagine glycosylation sites follow: Asn38, Asn163, Asn171, Asn211, Asn236, Asn318, Asn333, and Asn352. A helical membrane pass occupies residues 430–450 (VFLLMSFLVCGTLAFLHNHLV).

This sequence belongs to the COBRA family.

The protein localises to the membrane. This is COBRA-like protein 2 (BC1L2) from Oryza sativa subsp. japonica (Rice).